A 165-amino-acid chain; its full sequence is Neurotrophin-3 (165 aa).

The N-terminal stretch at 1–3 (IQS) is a signal peptide. Residues 4 to 119 (TSMDQGSLSE…VLNQTSRRKR (116 aa)) constitute a propeptide that is removed on maturation. Residue Asn-112 is glycosylated (N-linked (GlcNAc...) asparagine).

It belongs to the NGF-beta family.

Its subcellular location is the secreted. Functionally, seems to promote the survival of visceral and proprioceptive sensory neurons. The protein is Neurotrophin-3 (NTF3) of Aspidites melanocephalus (Black-headed python).